A 33-amino-acid chain; its full sequence is Beta-theraphotoxin-Cm1b (33 aa).

3 disulfide bridges follow: cysteine 2-cysteine 17, cysteine 9-cysteine 22, and cysteine 16-cysteine 29. Residue leucine 33 is modified to Leucine amide.

This sequence belongs to the neurotoxin 10 (Hwtx-1) family. 04 (CcoTx1) subfamily. Expressed by the venom gland.

It is found in the secreted. In terms of biological role, inhibits several voltage-gated sodium channels and only one voltage-gated calcium channel (Cav2.2/CACNA1B (IC(50)=1.1 uM) and Nav1.2/SCN2A (IC(50)=3.7-80 nM), Nav1.3/SCN3A (IC(50)=88-5570 nM), Nav1.1/SCN1A (IC(50)=170-407 nM), Nav1.7/SCN9A (IC(50)=95.5-230 nM), Nav1.6/SCN6A (IC(50)=49.9-3990 nM), Nav1.4/SCN4A (IC(50)=113-400 nM or &gt;10 uM), Nav1.5/SCN5A (IC(50)=1524-1634 nM or &gt;10 uM)). The toxin acts by shifting the voltage dependence of channel activation to more depolarized potentials and by blocking the inward component of the sodium current. It shows moderate affinity for lipid bilayers without cholesterol and high affinity for lipid bilayers containing cholesterol. In vivo, this toxin causes general ataxia, lack of response to stimuli, and semiparalysis. After a few minutes, the mice are unable to stand, and breathing is reduced in rhythm and intensity. Symptoms gradually increase with progressive slowing of breathing and flaccid paralysis; death occurred within 10 to 20 minutes post injection. Animals remain totally flaccid, and no symptoms of excitatory neurotoxicity are observed. This Ceratogyrus marshalli (Straighthorned baboon tarantula) protein is Beta-theraphotoxin-Cm1b.